A 255-amino-acid chain; its full sequence is High-affinity branched-chain amino acid transport ATP-binding protein BraF (255 aa).

In terms of domain architecture, ABC transporter spans leucine 6 to glutamate 254. Glycine 38 to threonine 45 is a binding site for ATP.

This sequence belongs to the ABC transporter superfamily.

It localises to the cell inner membrane. Its function is as follows. Component of the high affinity leucine, isoleucine, valine, transport system (LIV-I), which is operative without Na(+) and is specific for alanine and threonine, in addition to branched-chain amino acids. The chain is High-affinity branched-chain amino acid transport ATP-binding protein BraF (braF) from Pseudomonas aeruginosa (strain ATCC 15692 / DSM 22644 / CIP 104116 / JCM 14847 / LMG 12228 / 1C / PRS 101 / PAO1).